A 286-amino-acid polypeptide reads, in one-letter code: MFNWIKTFMLMAAITALFIVIGGMIGGRSGMMLALLFALGMNFFSYWFSDKMVLRMYNAQEVSETTAPQFYRMVQELAGRAGLPMPRVYLIDEAQPNAFATGRNPEHAAVAATTGILNILSERELRGVMAHELAHVQHRDILISTLSATMAGAISALANFAVFFGGRDEEGRPVNPIAGIAVAILAPLAASLIQMAISRAREFEADRGGAVISGDPQALASALDKIHRFAAGIPFAAAEAHPATAQMMIMNPLHGGGLANLFSTHPATEERIARLMHMAQTGTYPA.

2 helical membrane passes run 7 to 27 (TFMLMAAITALFIVIGGMIGG) and 29 to 49 (SGMMLALLFALGMNFFSYWFS). Residue histidine 131 participates in Zn(2+) binding. Residue glutamate 132 is part of the active site. Residue histidine 135 coordinates Zn(2+). The next 2 helical transmembrane spans lie at 146 to 166 (LSATMAGAISALANFAVFFGG) and 177 to 197 (IAGIAVAILAPLAASLIQMAI). Position 202 (glutamate 202) interacts with Zn(2+).

This sequence belongs to the peptidase M48B family. The cofactor is Zn(2+).

It localises to the cell inner membrane. In Ralstonia nicotianae (strain ATCC BAA-1114 / GMI1000) (Ralstonia solanacearum), this protein is Protease HtpX homolog.